We begin with the raw amino-acid sequence, 150 residues long: Endoribonuclease YbeY (150 aa).

Residues H102, H106, and H112 each contribute to the Zn(2+) site.

Belongs to the endoribonuclease YbeY family. Zn(2+) is required as a cofactor.

It localises to the cytoplasm. In terms of biological role, single strand-specific metallo-endoribonuclease involved in late-stage 70S ribosome quality control and in maturation of the 3' terminus of the 16S rRNA. This chain is Endoribonuclease YbeY, found in Thermotoga maritima (strain ATCC 43589 / DSM 3109 / JCM 10099 / NBRC 100826 / MSB8).